The following is a 432-amino-acid chain: Eukaryotic translation initiation factor 3 subunit E (432 aa).

Residues 221 to 401 (VYYNYPKGRD…MGVKSVSIHE (181 aa)) enclose the PCI domain.

Belongs to the eIF-3 subunit E family. In terms of assembly, component of the eukaryotic translation initiation factor 3 (eIF-3) complex.

Its subcellular location is the cytoplasm. Functionally, component of the eukaryotic translation initiation factor 3 (eIF-3) complex, which is involved in protein synthesis of a specialized repertoire of mRNAs and, together with other initiation factors, stimulates binding of mRNA and methionyl-tRNAi to the 40S ribosome. The eIF-3 complex specifically targets and initiates translation of a subset of mRNAs involved in cell proliferation. The chain is Eukaryotic translation initiation factor 3 subunit E from Caenorhabditis elegans.